Consider the following 433-residue polypeptide: Pyrimidine-nucleoside phosphorylase (433 aa).

Position 81-83 (Lys-81–Ser-83) interacts with phosphate. K(+) is bound by residues Gly-88 and Thr-90. Phosphate contacts are provided by residues Thr-92, Lys-108–Ser-110, and Thr-120. Residues Arg-168 and Lys-187 each coordinate substrate. Residues Leu-243, Ala-246, and Glu-255 each coordinate K(+).

The protein belongs to the thymidine/pyrimidine-nucleoside phosphorylase family. Homodimer. Requires K(+) as cofactor.

It catalyses the reaction uridine + phosphate = alpha-D-ribose 1-phosphate + uracil. The enzyme catalyses thymidine + phosphate = 2-deoxy-alpha-D-ribose 1-phosphate + thymine. The catalysed reaction is 2'-deoxyuridine + phosphate = 2-deoxy-alpha-D-ribose 1-phosphate + uracil. In terms of biological role, catalyzes phosphorolysis of the pyrimidine nucleosides uridine, thymidine and 2'-deoxyuridine with the formation of the corresponding pyrimidine base and ribose-1-phosphate. This Staphylococcus epidermidis (strain ATCC 12228 / FDA PCI 1200) protein is Pyrimidine-nucleoside phosphorylase (pdp).